The chain runs to 677 residues: DNA ligase (677 aa).

Residues 35–39, 84–85, and Glu115 each bind NAD(+); these read DAVYD and SL. Lys117 (N6-AMP-lysine intermediate) is an active-site residue. Arg138, Glu177, Lys296, and Lys320 together coordinate NAD(+). Cys414, Cys417, Cys432, and Cys437 together coordinate Zn(2+). The 79-residue stretch at 599 to 677 folds into the BRCT domain; it reads NGILKLNGKT…ETQLLEILEE (79 aa).

Belongs to the NAD-dependent DNA ligase family. LigA subfamily. It depends on Mg(2+) as a cofactor. Mn(2+) is required as a cofactor.

It carries out the reaction NAD(+) + (deoxyribonucleotide)n-3'-hydroxyl + 5'-phospho-(deoxyribonucleotide)m = (deoxyribonucleotide)n+m + AMP + beta-nicotinamide D-nucleotide.. DNA ligase that catalyzes the formation of phosphodiester linkages between 5'-phosphoryl and 3'-hydroxyl groups in double-stranded DNA using NAD as a coenzyme and as the energy source for the reaction. It is essential for DNA replication and repair of damaged DNA. This Nostoc sp. (strain PCC 7120 / SAG 25.82 / UTEX 2576) protein is DNA ligase.